A 669-amino-acid polypeptide reads, in one-letter code: MAQRFYLLLLLLIFLVNLICFSSQQDLSFVFNGFNQDQAGDELLLDGFARIQSPERVLQLTDGTTQQKGHAFFNRPFDFGSASSQSLSFFTQFVCALVPKPGFYGGHGIAFVLSSAHNLKKAYASSYLGLFNRSTNGSPSSHVLAVELDTVQSAETDDMDNNHVGIDENRIQSVVSASASYYSDREGKNISLILLSGDPIQVWVDYEDTLLNVTLAPLRNQKPSKPLLSRTINLTAIFPDRKAFVGFSAATGSSISNQYILGWSFSRSRRLLKSLDISELSTVPLFTEQKRKRSPLLIVLLVILTLVVIGGLGGYYLYRRKKYAEVREPWEKEYGPLRYSYESLYKATKGFNKDGRLGKGGFGEVYKGSLPLVGDIAVKRLSHNAEQGMKQFVAEVVTMGSLQHKNLVPLLGYCRRKGELLLVSKYMEGGSVDQYLFNGDKPPLSWSQRLAILRDIASALCYLHTGASQVVLHRDIKASNVMFDDHGANLSATAAVGTIGYMALELISTGTSTKTDVYAFGAFMLEVTCGRRPFDPEMPVEKRHLVKWVCECWRKHSLVDAIDTRLRDKFTLGEVEMVLKLGLLCTSIIPESRPNMEKVMQYINRDQALPDFSPDTPGIGVSTPMVMGIPGLAITSTSVTSSASVPLVSPPSTNNSMFISHTILNGDGR.

Residues 1 to 24 (MAQRFYLLLLLLIFLVNLICFSSQ) form the signal peptide. The Extracellular segment spans residues 25–295 (QDLSFVFNGF…FTEQKRKRSP (271 aa)). The tract at residues 26-266 (DLSFVFNGFN…NQYILGWSFS (241 aa)) is legume-lectin like. N-linked (GlcNAc...) asparagine glycans are attached at residues asparagine 132, asparagine 189, asparagine 212, and asparagine 233. The chain crosses the membrane as a helical span at residues 296 to 316 (LLIVLLVILTLVVIGGLGGYY). Over 317 to 669 (LYRRKKYAEV…SHTILNGDGR (353 aa)) the chain is Cytoplasmic. In terms of domain architecture, Protein kinase spans 351–609 (FNKDGRLGKG…MQYINRDQAL (259 aa)). ATP is bound by residues 357 to 365 (LGKGGFGEV) and lysine 379. The active-site Proton acceptor is aspartate 475.

In the C-terminal section; belongs to the protein kinase superfamily. Ser/Thr protein kinase family. It in the N-terminal section; belongs to the leguminous lectin family.

The protein resides in the cell membrane. It carries out the reaction L-seryl-[protein] + ATP = O-phospho-L-seryl-[protein] + ADP + H(+). The catalysed reaction is L-threonyl-[protein] + ATP = O-phospho-L-threonyl-[protein] + ADP + H(+). Involved in resistance response to the pathogenic fungus Alternaria brassicicola. The sequence is that of Probable L-type lectin-domain containing receptor kinase I.2 from Arabidopsis thaliana (Mouse-ear cress).